A 184-amino-acid polypeptide reads, in one-letter code: Peptidoglycan-recognition protein SC2 (184 aa).

The N-terminal stretch at 1 to 20 is a signal peptide; it reads MANKALILLAVLFCAQAVLG. The N-acetylmuramoyl-L-alanine amidase domain maps to 45–169; sequence SYAVIHHTAG…RQVGSTECPG (125 aa). A Zn(2+)-binding site is contributed by H50. C57 and C63 are joined by a disulfide. Positions 159 and 167 each coordinate Zn(2+).

The protein belongs to the N-acetylmuramoyl-L-alanine amidase 2 family. The cofactor is Zn(2+). In terms of tissue distribution, constitutively expressed at high level in gut, in addition to the induced expression in fat body.

Its subcellular location is the secreted. It carries out the reaction Hydrolyzes the link between N-acetylmuramoyl residues and L-amino acid residues in certain cell-wall glycopeptides.. Its function is as follows. N-acetylmuramyl-L-alanine amidase involved in innate immunity by degrading bacterial peptidoglycans (PGN). Probably plays a scavenger role by digesting biologically active PGN into biologically inactive fragments. Has no direct bacteriolytic activity. In Drosophila melanogaster (Fruit fly), this protein is Peptidoglycan-recognition protein SC2 (PGRP-SC2).